A 635-amino-acid chain; its full sequence is S-type anion channel SLAH3 (635 aa).

Residues 1 to 253 are Cytoplasmic-facing; it reads MEEKPNYVIQ…IVLPNDKKWP (253 aa). Over residues 102–121 the composition is skewed to polar residues; that stretch reads SDPTTSLSSENHKNSGSTGK. Positions 102–173 are disordered; the sequence is SDPTTSLSSE…SGHHQNQNQA (72 aa). Basic residues predominate over residues 153–165; sequence NHHHHLHRQHQSG. A Phosphoserine modification is found at Ser-189. Positions 193-217 are disordered; that stretch reads ERQFTRKPASVEPEAPNRNNQNLNT. Residues 254-276 form a helical membrane-spanning segment; it reads FLLRYPISTFGMCLGVSSQAIMW. At 277–299 the chain is on the extracellular side; the sequence is KTLATAEPTKFLHVPLWINQGLW. The chain crosses the membrane as a helical span at residues 300-320; it reads FISVALILTIATIYLLKIILF. The Cytoplasmic portion of the chain corresponds to 321–335; sequence FEAVRREYYHPIRIN. The helical transmembrane segment at 336-356 threads the bilayer; sequence FFFAPFISLLFLALGVPPSII. Over 357–358 the chain is Extracellular; that stretch reads TD. The chain crosses the membrane as a helical span at residues 359-379; sequence LPHFLWYLLMFPFICLELKIY. The Cytoplasmic segment spans residues 380 to 396; sequence GQWMSGGQRRLSRVANP. Residues 397–417 form a helical membrane-spanning segment; the sequence is TNHLSVVGNFVGALLGASMGL. At 418–419 the chain is on the extracellular side; sequence RE. A helical transmembrane segment spans residues 420 to 440; that stretch reads GPIFFYAVGMAHYLVLFVTLY. Residues 441-455 are Cytoplasmic-facing; it reads QRLPTNETLPKDLHP. A helical membrane pass occupies residues 456-476; the sequence is VFFLFVAAPSVASMAWAKVTG. Position 477 (Ser-477) is a topological domain, extracellular. Residues 478–498 traverse the membrane as a helical segment; that stretch reads FDYGSKVCYFIAIFLYFSLAV. Residues 499–504 are Cytoplasmic-facing; it reads RINFFR. The helical transmembrane segment at 505 to 525 threads the bilayer; that stretch reads GIKFSLSWWAYTFPMTGAAIA. At 526–541 the chain is on the extracellular side; it reads TIRYATVVKSTMTQIM. The chain crosses the membrane as a helical span at residues 542 to 562; sequence CVVLCAIATLVVFALLVTTII. The Cytoplasmic segment spans residues 563–635; the sequence is HAFVLRDLFP…NGKTQESDSS (73 aa). The tract at residues 611 to 635 is disordered; it reads FTDSDSSQSNDVEACNGKTQESDSS. Residues 614 to 635 are compositionally biased toward polar residues; that stretch reads SDSSQSNDVEACNGKTQESDSS.

The protein belongs to the SLAC1 S-type anion channel family. In terms of assembly, homotrimer. Interacts with KAT1. In terms of tissue distribution, expressed in the whole plant, escpecially in vascular systems.

It is found in the cell membrane. Slow, weak voltage-dependent S-type anion efflux channel involved in maintenance of anion homeostasis. Binds to the highly selective inward-rectifying potassium channel KAT1 and inhibits its activity. Functions as an essential negative regulator of inward potassium channels in guard cells. Essential for the efficient stomatal closure and opening in guard cells. This Arabidopsis thaliana (Mouse-ear cress) protein is S-type anion channel SLAH3 (SLAH3).